An 85-amino-acid polypeptide reads, in one-letter code: Toxin To9 (85 aa).

An N-terminal signal peptide occupies residues 1–19 (MNYSTLIAVASLLTAGTES). The LCN-type CS-alpha/beta domain maps to 21 to 81 (KDGYPVKEGD…AAIKGYGRCR (61 aa)). 4 cysteine pairs are disulfide-bonded: C31-C80, C35-C56, C42-C63, and C46-C65. Residue P82 is modified to Proline amide.

This sequence belongs to the long (4 C-C) scorpion toxin superfamily. Sodium channel inhibitor family. Alpha subfamily. Expressed by the venom gland.

The protein localises to the secreted. Its function is as follows. Alpha toxins bind voltage-independently at site-3 of sodium channels (Nav) and inhibit the inactivation of the activated channels, thereby blocking neuronal transmission. The polypeptide is Toxin To9 (Tityus obscurus (Amazonian scorpion)).